A 548-amino-acid chain; its full sequence is Chaperonin GroEL (548 aa).

Residues 30 to 33 (TLGP), K51, 87 to 91 (DGTTT), G415, 479 to 481 (NAA), and D495 contribute to the ATP site.

Belongs to the chaperonin (HSP60) family. In terms of assembly, forms a cylinder of 14 subunits composed of two heptameric rings stacked back-to-back. Interacts with the co-chaperonin GroES.

The protein resides in the cytoplasm. It catalyses the reaction ATP + H2O + a folded polypeptide = ADP + phosphate + an unfolded polypeptide.. Together with its co-chaperonin GroES, plays an essential role in assisting protein folding. The GroEL-GroES system forms a nano-cage that allows encapsulation of the non-native substrate proteins and provides a physical environment optimized to promote and accelerate protein folding. The sequence is that of Chaperonin GroEL from Lawsonia intracellularis (strain PHE/MN1-00).